The following is a 63-amino-acid chain: MPQTFFVFCFLFFVFLQLFPGTGEIAVCETCRLGRGKCRRACIESEKIVGWCKLNFFCCRERI.

The first 23 residues, 1 to 23, serve as a signal peptide directing secretion; the sequence is MPQTFFVFCFLFFVFLQLFPGTG. Cystine bridges form between Cys-31-Cys-58, Cys-38-Cys-52, and Cys-42-Cys-59.

Belongs to the beta-defensin family. In terms of tissue distribution, expressed in testis, epididymis (caput, corpus and cauda), kidney and neonatal and adult brain.

The protein localises to the secreted. Its function is as follows. Has antibacterial activity. The sequence is that of Beta-defensin 35 (Defb35) from Mus musculus (Mouse).